The sequence spans 230 residues: MKILLASLCLISLLVILPSVFSASSSSEDFDFFYFVQQWPGSYCDTQKKCCYPNSGKPAADFGIHGLWPNYKDGTYPSNCDASKPFDSSTISDLLTSMKKSWPTLACPSGSGEAFWEHEWEKHGTCSESVIDQHEYFQTALNLKQKTNLLGALTKAGINPDGKSYSLESIRDSIKESIGFTPWVECNRDGSGNSQLYQVYLCVDRSGSGLIECPVFPHGKCGAEIEFPSF.

The N-terminal stretch at 1 to 22 (MKILLASLCLISLLVILPSVFS) is a signal peptide. Gln-38 lines the RNA pocket. A disulfide bridge links Cys-44 with Cys-50. Residues His-65, Phe-115, 118–119 (HE), and 122–123 (KH) contribute to the RNA site. His-65 functions as the Proton donor in the catalytic mechanism. Disulfide bonds link Cys-80/Cys-126, Cys-186/Cys-221, and Cys-202/Cys-213. Glu-119 is a catalytic residue. Residue His-123 is the Proton acceptor of the active site.

It belongs to the RNase T2 family.

It catalyses the reaction a ribonucleotidyl-ribonucleotide-RNA + H2O = a 3'-end 3'-phospho-ribonucleotide-RNA + a 5'-end dephospho-ribonucleoside-RNA + H(+). Its function is as follows. May remobilize phosphate, particularly when cells senesce or when phosphate becomes limiting. The polypeptide is Ribonuclease 1 (RNS1) (Arabidopsis thaliana (Mouse-ear cress)).